The following is a 327-amino-acid chain: COP9 signalosome complex subunit 6 (327 aa).

The 134-residue stretch at 41–174 folds into the MPN domain; it reads VALHPLVILN…VSVFESVIDI (134 aa). The interval 211–327 is interaction with Vpr; sequence SGENSTVAEH…IGRRMRGLFF (117 aa).

It belongs to the peptidase M67A family. CSN6 subfamily. In terms of assembly, component of the CSN complex, composed of COPS1/GPS1, COPS2, COPS3, COPS4, COPS5, COPS6, COPS7 (COPS7A or COPS7B), COPS8 and COPS9 isoform 1. In the complex, it probably interacts directly with COPS2, COPS4, COPS5, COPS7 (COPS7A or COPS7B) and COPS9 isoform 1. Interacts with the translation initiation factor EIF3S6. Interacts weakly with RBX1. Directly interacts with COP1 and 14-3-3 protein sigma/SFN. Interacts with ERCC6. As to quaternary structure, (Microbial infection) Interacts with the HIV-1 protein Vpr. In terms of tissue distribution, widely expressed.

The protein localises to the nucleus. Its subcellular location is the cytoplasm. The protein resides in the perinuclear region. Functionally, component of the COP9 signalosome complex (CSN), a complex involved in various cellular and developmental processes. The CSN complex is an essential regulator of the ubiquitin (Ubl) conjugation pathway by mediating the deneddylation of the cullin subunits of SCF-type E3 ligase complexes, leading to decrease the Ubl ligase activity of SCF-type complexes such as SCF, CSA or DDB2. The complex is also involved in phosphorylation of p53/TP53, c-jun/JUN, IkappaBalpha/NFKBIA, ITPK1 and IRF8, possibly via its association with CK2 and PKD kinases. CSN-dependent phosphorylation of TP53 and JUN promotes and protects degradation by the Ubl system, respectively. Has some glucocorticoid receptor-responsive activity. Stabilizes COP1 through reducing COP1 auto-ubiquitination and decelerating COP1 turnover rate, hence regulates the ubiquitination of COP1 targets. In Homo sapiens (Human), this protein is COP9 signalosome complex subunit 6 (COPS6).